The sequence spans 71 residues: U-scoloptoxin(21)-Sm1a (71 aa).

Positions 1 to 21 are cleaved as a signal peptide; it reads MKSVIFALFLVYLLIVRAAEA. Positions 45 to 71 are disordered; sequence IELANDPNGPGRRRRAPAENEDFLKHS. Basic and acidic residues predominate over residues 60–71; it reads APAENEDFLKHS.

This sequence belongs to the scoloptoxin-21 family. In terms of tissue distribution, expressed by the venom gland.

The protein resides in the secreted. The sequence is that of U-scoloptoxin(21)-Sm1a from Scolopendra morsitans (Tanzanian blue ringleg centipede).